The primary structure comprises 508 residues: Histidine ammonia-lyase (508 aa).

The 5-imidazolinone (Ala-Gly) cross-link spans 141-143 (ASG). Residue S142 is modified to 2,3-didehydroalanine (Ser).

Belongs to the PAL/histidase family. Post-translationally, contains an active site 4-methylidene-imidazol-5-one (MIO), which is formed autocatalytically by cyclization and dehydration of residues Ala-Ser-Gly.

It localises to the cytoplasm. It carries out the reaction L-histidine = trans-urocanate + NH4(+). The protein operates within amino-acid degradation; L-histidine degradation into L-glutamate; N-formimidoyl-L-glutamate from L-histidine: step 1/3. The sequence is that of Histidine ammonia-lyase (hutH) from Bacillus subtilis (strain 168).